A 294-amino-acid chain; its full sequence is Protease HtpX (294 aa).

A run of 2 helical transmembrane segments spans residues Ile4–Leu24 and Gly34–Met52. Zn(2+) is bound at residue His139. The active site involves Glu140. His143 contributes to the Zn(2+) binding site. Transmembrane regions (helical) follow at residues Val158–Leu178 and Leu194–Ile214. Glu223 contributes to the Zn(2+) binding site.

This sequence belongs to the peptidase M48B family. Zn(2+) serves as cofactor.

The protein resides in the cell inner membrane. This chain is Protease HtpX, found in Klebsiella pneumoniae subsp. pneumoniae (strain ATCC 700721 / MGH 78578).